A 380-amino-acid polypeptide reads, in one-letter code: Crotonobetainyl-CoA reductase (380 aa).

This sequence belongs to the acyl-CoA dehydrogenase family. Homotetramer. FAD serves as cofactor.

Its subcellular location is the cytoplasm. It catalyses the reaction 4-(trimethylamino)butanoyl-CoA + oxidized [electron-transfer flavoprotein] + H(+) = crotonobetainyl-CoA + reduced [electron-transfer flavoprotein]. It functions in the pathway amine and polyamine metabolism; carnitine metabolism. Functionally, catalyzes the reduction of crotonobetainyl-CoA to gamma-butyrobetainyl-CoA. In Proteus sp. (strain LE138), this protein is Crotonobetainyl-CoA reductase.